The primary structure comprises 143 residues: Transcription antitermination protein NusB (143 aa).

The protein belongs to the NusB family.

Functionally, involved in transcription antitermination. Required for transcription of ribosomal RNA (rRNA) genes. Binds specifically to the boxA antiterminator sequence of the ribosomal RNA (rrn) operons. This is Transcription antitermination protein NusB from Dehalococcoides mccartyi (strain ATCC BAA-2266 / KCTC 15142 / 195) (Dehalococcoides ethenogenes (strain 195)).